The following is a 116-amino-acid chain: MLKEFKEFALKGNVLDLAIAVVMGAAFNKIVTSLVQYIIMPLIGKLFGSVNFAEDWSFWGIKYGLFIQSIIDFIIIAFALFIFVKIANTVMKKEEKEEEVEENTVLLTEIRDLLKK.

2 helical membrane passes run 7–27 (EFAL…GAAF) and 64–84 (GLFI…FIFV).

It belongs to the MscL family. As to quaternary structure, homopentamer.

It is found in the cell membrane. In terms of biological role, channel that opens in response to stretch forces in the membrane lipid bilayer. May participate in the regulation of osmotic pressure changes within the cell. This Staphylococcus epidermidis (strain ATCC 35984 / DSM 28319 / BCRC 17069 / CCUG 31568 / BM 3577 / RP62A) protein is Large-conductance mechanosensitive channel.